The sequence spans 252 residues: Ubiquinone/menaquinone biosynthesis C-methyltransferase UbiE (252 aa).

S-adenosyl-L-methionine is bound by residues Thr-75, Asp-96, and 123–124; that span reads NA.

Belongs to the class I-like SAM-binding methyltransferase superfamily. MenG/UbiE family.

It catalyses the reaction a 2-demethylmenaquinol + S-adenosyl-L-methionine = a menaquinol + S-adenosyl-L-homocysteine + H(+). The enzyme catalyses a 2-methoxy-6-(all-trans-polyprenyl)benzene-1,4-diol + S-adenosyl-L-methionine = a 5-methoxy-2-methyl-3-(all-trans-polyprenyl)benzene-1,4-diol + S-adenosyl-L-homocysteine + H(+). Its pathway is quinol/quinone metabolism; menaquinone biosynthesis; menaquinol from 1,4-dihydroxy-2-naphthoate: step 2/2. It participates in cofactor biosynthesis; ubiquinone biosynthesis. Methyltransferase required for the conversion of demethylmenaquinol (DMKH2) to menaquinol (MKH2) and the conversion of 2-polyprenyl-6-methoxy-1,4-benzoquinol (DDMQH2) to 2-polyprenyl-3-methyl-6-methoxy-1,4-benzoquinol (DMQH2). This is Ubiquinone/menaquinone biosynthesis C-methyltransferase UbiE from Methylobacterium nodulans (strain LMG 21967 / CNCM I-2342 / ORS 2060).